Consider the following 344-residue polypeptide: Nuclear distribution protein nudE-like 1-A (344 aa).

A coiled-coil region spans residues 26–187 (YKKSYKEAQE…RQELAVRDTR (162 aa)). Basic and acidic residues predominate over residues 181-190 (LAVRDTRSEV). 2 disordered regions span residues 181-209 (LAVR…TDSA) and 322-344 (PGDG…VLSV).

Belongs to the nudE family. Phosphorylated in mitosis.

It localises to the cytoplasm. It is found in the cytoskeleton. The protein resides in the microtubule organizing center. The protein localises to the centrosome. Its subcellular location is the spindle. In terms of biological role, required for organization of the cellular microtubule array and microtubule anchoring at the centrosome. Positively regulates the activity of the minus-end directed microtubule motor protein dynein. May enhance dynein-mediated microtubule sliding by targeting dynein to the microtubule plus end. This chain is Nuclear distribution protein nudE-like 1-A (ndel1a), found in Danio rerio (Zebrafish).